Reading from the N-terminus, the 886-residue chain is Microsomal triglyceride transfer protein (886 aa).

Positions 1 to 24 are cleaved as a signal peptide; that stretch reads MLRLAGLLLCVTSFLSTSSLGANA. A Vitellogenin domain is found at 28–662; it reads LDNDRLYRYS…QSNNALLHGL (635 aa). Intrachain disulfides connect C174-C194 and C440-C445.

As to quaternary structure, heterodimer; heterodimerizes with the protein disulfide isomerase. Interacts with apolipoprotein B.

It is found in the endoplasmic reticulum. In terms of biological role, catalyzes the transport of triglyceride, cholesteryl ester, and phospholipid between phospholipid surfaces. Required for the secretion of plasma lipoproteins that contain apolipoprotein B. The polypeptide is Microsomal triglyceride transfer protein (Megalobrama amblycephala (Chinese blunt snout bream)).